The sequence spans 151 residues: Cytochrome c-type biogenesis protein CcmE (151 aa).

The Cytoplasmic segment spans residues 1–9; the sequence is MKGLKKKRR. The helical; Signal-anchor for type II membrane protein transmembrane segment at 10 to 30 threads the bilayer; it reads IQIIALAFVALAGSTALIGYA. Over 31-151 the chain is Periplasmic; that stretch reads MRDGINFFRS…FQHTEDQPQG (121 aa). Residues His123 and Tyr127 each contribute to the heme site.

The protein belongs to the CcmE/CycJ family.

It is found in the cell inner membrane. Functionally, heme chaperone required for the biogenesis of c-type cytochromes. Transiently binds heme delivered by CcmC and transfers the heme to apo-cytochromes in a process facilitated by CcmF and CcmH. This Cereibacter sphaeroides (strain ATCC 17029 / ATH 2.4.9) (Rhodobacter sphaeroides) protein is Cytochrome c-type biogenesis protein CcmE.